A 1407-amino-acid chain; its full sequence is DNA-directed RNA polymerase subunit beta' (1407 aa).

The Zn(2+) site is built by cysteine 70, cysteine 72, cysteine 85, and cysteine 88. Positions 460, 462, and 464 each coordinate Mg(2+). Zn(2+) is bound by residues cysteine 814, cysteine 888, cysteine 895, and cysteine 898.

It belongs to the RNA polymerase beta' chain family. The RNAP catalytic core consists of 2 alpha, 1 beta, 1 beta' and 1 omega subunit. When a sigma factor is associated with the core the holoenzyme is formed, which can initiate transcription. Requires Mg(2+) as cofactor. Zn(2+) is required as a cofactor.

The catalysed reaction is RNA(n) + a ribonucleoside 5'-triphosphate = RNA(n+1) + diphosphate. In terms of biological role, DNA-dependent RNA polymerase catalyzes the transcription of DNA into RNA using the four ribonucleoside triphosphates as substrates. The sequence is that of DNA-directed RNA polymerase subunit beta' from Salmonella arizonae (strain ATCC BAA-731 / CDC346-86 / RSK2980).